The following is a 242-amino-acid chain: Acetoacetyl-CoA reductase (242 aa).

NADP(+) is bound by residues 12–14 (RGI) and 82–86 (NAGIT). Residues Asp-88 and 141-144 (QAGQ) each bind substrate. Tyr-147 functions as the Proton acceptor in the catalytic mechanism. Residue 177 to 180 (PGYI) coordinates NADP(+). 178-179 (GY) is a binding site for substrate.

It belongs to the short-chain dehydrogenases/reductases (SDR) family.

The protein resides in the cytoplasm. The catalysed reaction is a (3R)-3-hydroxyacyl-CoA + NADP(+) = a 3-oxoacyl-CoA + NADPH + H(+). It participates in biopolymer metabolism; poly-(R)-3-hydroxybutanoate biosynthesis. This is Acetoacetyl-CoA reductase (phaB) from Paracoccus denitrificans.